Here is a 315-residue protein sequence, read N- to C-terminus: Ribosomal RNA small subunit methyltransferase H (315 aa).

Residues 36–38 (GGH), D56, F81, D103, and Q110 contribute to the S-adenosyl-L-methionine site.

The protein belongs to the methyltransferase superfamily. RsmH family.

Its subcellular location is the cytoplasm. The catalysed reaction is cytidine(1402) in 16S rRNA + S-adenosyl-L-methionine = N(4)-methylcytidine(1402) in 16S rRNA + S-adenosyl-L-homocysteine + H(+). Specifically methylates the N4 position of cytidine in position 1402 (C1402) of 16S rRNA. This chain is Ribosomal RNA small subunit methyltransferase H, found in Idiomarina loihiensis (strain ATCC BAA-735 / DSM 15497 / L2-TR).